The chain runs to 129 residues: uncharacterized protein (129 aa).

Residue K121 forms an Isoglutamyl lysine isopeptide (Lys-Gln) (interchain with Q-Cter in protein Pup) linkage.

This is an uncharacterized protein from Mycolicibacterium smegmatis (strain ATCC 700084 / mc(2)155) (Mycobacterium smegmatis).